A 284-amino-acid polypeptide reads, in one-letter code: Bifunctional protein FolD (284 aa).

NADP(+) is bound by residues 163–165 (GAS), I188, and I229.

Belongs to the tetrahydrofolate dehydrogenase/cyclohydrolase family. In terms of assembly, homodimer.

The catalysed reaction is (6R)-5,10-methylene-5,6,7,8-tetrahydrofolate + NADP(+) = (6R)-5,10-methenyltetrahydrofolate + NADPH. It catalyses the reaction (6R)-5,10-methenyltetrahydrofolate + H2O = (6R)-10-formyltetrahydrofolate + H(+). It participates in one-carbon metabolism; tetrahydrofolate interconversion. In terms of biological role, catalyzes the oxidation of 5,10-methylenetetrahydrofolate to 5,10-methenyltetrahydrofolate and then the hydrolysis of 5,10-methenyltetrahydrofolate to 10-formyltetrahydrofolate. The sequence is that of Bifunctional protein FolD from Nautilia profundicola (strain ATCC BAA-1463 / DSM 18972 / AmH).